The following is a 105-amino-acid chain: Unclassified hydrophobin D (105 aa).

The first 18 residues, 1–18 (MKFYIVLLALAAFAMAEA), serve as a signal peptide directing secretion. Disulfide bonds link Cys-35–Cys-86, Cys-42–Cys-83, and Cys-43–Cys-49.

The protein localises to the secreted. It is found in the cell wall. Its function is as follows. Aerial growth, conidiation, and dispersal of filamentous fungi in the environment rely upon a capability of their secreting small amphipathic proteins called hydrophobins (HPBs) with low sequence identity. Class I can self-assemble into an outermost layer of rodlet bundles on aerial cell surfaces, conferring cellular hydrophobicity that supports fungal growth, development and dispersal; whereas Class II form highly ordered films at water-air interfaces through intermolecular interactions but contribute nothing to the rodlet structure. In P.expansum, hydrophobins contribute to germination, tolerance to cold stress and mycotoxins patulin and citrinin production. This is Unclassified hydrophobin D from Penicillium expansum (Blue mold rot fungus).